We begin with the raw amino-acid sequence, 681 residues long: tRNA wybutosine-synthesizing protein 4 (681 aa).

A compositionally biased stretch (basic residues) spans 1-11; sequence MSNKNQRKTKS. Residues 1 to 21 form a disordered region; the sequence is MSNKNQRKTKSKDREVRKTND. S-adenosyl-L-methionine contacts are provided by residues R66, G92, D119, 165–166, and E193; that span reads NL.

This sequence belongs to the methyltransferase superfamily. LCMT family.

The enzyme catalyses 7-[(3S)-3-amino-3-carboxypropyl]wyosine(37) in tRNA(Phe) + S-adenosyl-L-methionine = 7-[(3S)-(3-amino-3-methoxycarbonyl)propyl]wyosine(37) in tRNA(Phe) + S-adenosyl-L-homocysteine. The catalysed reaction is 7-[(3S)-(3-amino-3-methoxycarbonyl)propyl]wyosine(37) in tRNA(Phe) + S-adenosyl-L-methionine + CO2 = wybutosine(37) in tRNA(Phe) + S-adenosyl-L-homocysteine + 2 H(+). It functions in the pathway tRNA modification; wybutosine-tRNA(Phe) biosynthesis. In terms of biological role, probable S-adenosyl-L-methionine-dependent methyltransferase that acts as a component of the wybutosine biosynthesis pathway. Wybutosine is a hyper modified guanosine with a tricyclic base found at the 3'-position adjacent to the anticodon of eukaryotic phenylalanine tRNA. May methylate the carboxyl group of leucine residues to form alpha-leucine ester residues. In Schizosaccharomyces pombe (strain 972 / ATCC 24843) (Fission yeast), this protein is tRNA wybutosine-synthesizing protein 4 (ppm2).